The following is a 210-amino-acid chain: Small ribosomal subunit protein uS7 (210 aa).

Belongs to the universal ribosomal protein uS7 family.

This chain is Small ribosomal subunit protein uS7 (RPS5), found in Podocoryna carnea (Hydrozoan).